The primary structure comprises 559 residues: 2-isopropylmalate synthase (559 aa).

The Pyruvate carboxyltransferase domain maps to 33 to 307 (PIWCSSDLRD…NPELDFSDID (275 aa)). 4 residues coordinate Mg(2+): Asp42, His246, His248, and Asn282. Positions 439 to 559 (ANTPYALVSH…SLSEQQAKAA (121 aa)) are regulatory domain.

Belongs to the alpha-IPM synthase/homocitrate synthase family. LeuA type 2 subfamily. As to quaternary structure, homodimer. Mg(2+) is required as a cofactor.

It is found in the cytoplasm. The enzyme catalyses 3-methyl-2-oxobutanoate + acetyl-CoA + H2O = (2S)-2-isopropylmalate + CoA + H(+). The protein operates within amino-acid biosynthesis; L-leucine biosynthesis; L-leucine from 3-methyl-2-oxobutanoate: step 1/4. Catalyzes the condensation of the acetyl group of acetyl-CoA with 3-methyl-2-oxobutanoate (2-ketoisovalerate) to form 3-carboxy-3-hydroxy-4-methylpentanoate (2-isopropylmalate). The polypeptide is 2-isopropylmalate synthase (Pseudomonas fluorescens (strain ATCC BAA-477 / NRRL B-23932 / Pf-5)).